We begin with the raw amino-acid sequence, 103 residues long: Histone H4 (103 aa).

Over residues methionine 1–glycine 14 the composition is skewed to gly residues. The segment at methionine 1–arginine 20 is disordered. Lysine 6 is subject to N6-acetyl-N6-methyllysine; alternate. 3 positions are modified to N6-methyllysine; alternate: lysine 6, lysine 9, and lysine 13. Residue lysine 13 is modified to N6-acetyl-N6-methyllysine; alternate. Residues lysine 17–lysine 21 mediate DNA binding. Lysine 92 is subject to N6-glutaryllysine.

Belongs to the histone H4 family. The nucleosome is a histone octamer containing two molecules each of H2A, H2B, H3 and H4 assembled in one H3-H4 heterotetramer and two H2A-H2B heterodimers. The octamer wraps approximately 147 bp of DNA. Glutarylation at Lys-92 (H4K91glu) destabilizes nucleosomes by promoting dissociation of the H2A-H2B dimers from nucleosomes.

The protein resides in the nucleus. It is found in the chromosome. Core component of nucleosome. Nucleosomes wrap and compact DNA into chromatin, limiting DNA accessibility to the cellular machineries which require DNA as a template. Histones thereby play a central role in transcription regulation, DNA repair, DNA replication and chromosomal stability. DNA accessibility is regulated via a complex set of post-translational modifications of histones, also called histone code, and nucleosome remodeling. This chain is Histone H4 (hH4-1), found in Neurospora crassa (strain ATCC 24698 / 74-OR23-1A / CBS 708.71 / DSM 1257 / FGSC 987).